A 269-amino-acid polypeptide reads, in one-letter code: Protein MGF 110-1L (269 aa).

Residues 1 to 26 (MLGLQIFTLLSIPTLLYTYELELLDL) form the signal peptide. The A repeat unit spans residues 1-145 (MLGLQIFTLL…YVRKRSLQTV (145 aa)). Residues 27-116 (TRTPPEKELE…HEWHEAVIRK (90 aa)) lie on the Extracellular side of the membrane. An N-linked (GlcNAc...) asparagine; by host glycan is attached at N75. Residues 117-137 (WQKLLTYGFYLVGCVLVANYV) traverse the membrane as a helical segment. Over 138-144 (RKRSLQT) the chain is Cytoplasmic. The helical transmembrane segment at 145-165 (VMYLLVLLVIFFLLSQLMLYR) threads the bilayer. The B repeat unit spans residues 147 to 269 (YLLVLLVIFF…DNLMKKQDIM (123 aa)). Over 166-269 (ELEDKKHKIG…DNLMKKQDIM (104 aa)) the chain is Extracellular.

It belongs to the asfivirus MGF 110 family.

The protein resides in the host membrane. Its function is as follows. Plays a role in virus cell tropism, and may be required for efficient virus replication in macrophages. This is Protein MGF 110-1L from African swine fever virus (isolate Warthog/Namibia/Wart80/1980) (ASFV).